Consider the following 115-residue polypeptide: Histidine decarboxylase proenzyme (115 aa).

At serine 83 the chain carries Pyruvic acid (Ser).

The proenzyme is a hexamer of identical pi chains; each pi chain monomer is cleaved to form a small (or beta) chain and a large (or alpha) chain by non-hydrolytic self-catalysis. The cofactor is pyruvate.

The catalysed reaction is L-histidine + H(+) = histamine + CO2. The chain is Histidine decarboxylase proenzyme from Lentilactobacillus buchneri (Lactobacillus buchneri).